The sequence spans 137 residues: Envelope glycoprotein L (137 aa).

The signal sequence occupies residues 1 to 22 (MRAVGVFLAICLVTIFVLPTWG). Positions 23–128 (NWAYPCCHVT…SVEDLFGANL (106 aa)) are interaction with gH. 2 disulfides stabilise this stretch: C28–C56 and C29–C79.

This sequence belongs to the herpesviridae glycoprotein L family. As to quaternary structure, interacts with glycoprotein H (gH); this interaction is necessary for the correct processing and cell surface expression of gH. The heterodimer gH/gL seems to interact with gB trimers during fusion. The heterodimer gH/gL interacts with host EPHA2 to facilitate virus internalization and fusion.

The protein localises to the virion membrane. It localises to the host cell membrane. Its subcellular location is the host Golgi apparatus. The protein resides in the host trans-Golgi network. Functionally, the heterodimer glycoprotein H-glycoprotein L is required for the fusion of viral and plasma membranes leading to virus entry into the host cell. Acts as a functional inhibitor of gH and maintains gH in an inhibited form. Upon binding to host integrins, gL dissociates from gH leading to activation of the viral fusion glycoproteins gB and gH. Fusion of EBV with B-lymphocytes requires the additional receptor-binding protein gp42, which forms a complex with gH/gL. The heterodimer gH/gL targets also host EPHA2 to promote viral entry. In Homo sapiens (Human), this protein is Envelope glycoprotein L.